The following is a 312-amino-acid chain: MPSAIEAIYIILIAGELTIGIWGNGFIVLVNCXDWLKRRDISLIDIILISLAISRICLLCVISLDGFFMLLFPGTYGNSVLVSIVNVVWTFANNSSLWFTSCLSIFYLLKIANISHPFFFWLKLKINKVMLAILLGSFLISLIISVXKNDDMWYHLFKVSXEENITWEFKVSKIPGTFKQLTLNLGGRVPFILCLISFFLLLFSLVRHTKQIQLHATGFRDPSTEAHMRAIKAVIIFLLLLIVYYPVFLVMTSSALIPQGKLVLMIGDIVTVIFPSSHSFILIMGNSKLREAFLKMLRFVKGFLRRRKPFVP.

Over 1 to 9 (MPSAIEAIY) the chain is Extracellular. A helical membrane pass occupies residues 10-32 (IILIAGELTIGIWGNGFIVLVNC). Residues 33 to 52 (XDWLKRRDISLIDIILISLA) are Cytoplasmic-facing. The chain crosses the membrane as a helical span at residues 53–72 (ISRICLLCVISLDGFFMLLF). The Extracellular portion of the chain corresponds to 73–86 (PGTYGNSVLVSIVN). Residues 87–109 (VVWTFANNSSLWFTSCLSIFYLL) form a helical membrane-spanning segment. At 110–128 (KIANISHPFFFWLKLKINK) the chain is on the cytoplasmic side. The helical transmembrane segment at 129–146 (VMLAILLGSFLISLIISV) threads the bilayer. Topologically, residues 147-180 (XKNDDMWYHLFKVSXEENITWEFKVSKIPGTFKQ) are extracellular. Asparagine 164 is a glycosylation site (N-linked (GlcNAc...) asparagine). Residues 181 to 203 (LTLNLGGRVPFILCLISFFLLLF) form a helical membrane-spanning segment. At 204 to 234 (SLVRHTKQIQLHATGFRDPSTEAHMRAIKAV) the chain is on the cytoplasmic side. The helical transmembrane segment at 235–257 (IIFLLLLIVYYPVFLVMTSSALI) threads the bilayer. The Extracellular segment spans residues 258–261 (PQGK). Residues 262–284 (LVLMIGDIVTVIFPSSHSFILIM) form a helical membrane-spanning segment. Over 285–312 (GNSKLREAFLKMLRFVKGFLRRRKPFVP) the chain is Cytoplasmic.

Belongs to the G-protein coupled receptor T2R family.

The protein localises to the membrane. Gustducin-coupled receptor implicated in the perception of bitter compounds in the oral cavity and the gastrointestinal tract. Signals through PLCB2 and the calcium-regulated cation channel TRPM5. The chain is Taste receptor type 2 member 9 (TAS2R9) from Pan troglodytes (Chimpanzee).